The sequence spans 457 residues: Transcription factor CP2-like protein 1 (457 aa).

Positions 1-52 are mediate transcriptional repression; it reads MLFWHTQPEHYNQHNSGSYLRDVLALPIFKQEEPQLSPENEARLPPLQYVLC. The Grh/CP2 DB domain occupies 43–280; the sequence is RLPPLQYVLC…PSPSYNGSPN (238 aa). 2 disordered regions span residues 219 to 245 and 271 to 301; these read KPKGADRKQETDREKMEKRTAQEKEKY and PSPSYNGSPNSFGLGEGNASPTHPVEALPVG. Positions 221-245 are enriched in basic and acidic residues; that stretch reads KGADRKQETDREKMEKRTAQEKEKY. An SAM2-like domain region spans residues 261 to 365; the sequence is PDVAYQVNSA…IRLFNAIKGR (105 aa). A compositionally biased stretch (polar residues) spans 271–281; it reads PSPSYNGSPNS.

It belongs to the grh/CP2 family. CP2 subfamily. In terms of assembly, forms homohexamers via its SAM-like domain. Interacts with MTA1; which is indispensable for TFCP2L1-mediated self-renewal-promoting effect and endoderm-inhibiting action.

The protein localises to the nucleus. In terms of biological role, transcription factor that facilitates establishment and maintenance of pluripotency in embryonic stem cells (ESCs). With KLF2, acts as the major effector of self-renewal that mediates induction of pluripotency downstream of LIF/STAT3 and Wnt/beta-catenin signaling. Required for normal duct development in the salivary gland and kidney. Coordinates the development of the kidney collecting ducts intercalated (IC) and principal (PC) cells, which regulate acid-base and salt-water homeostasis, respectively. Regulates the expression of IC genes including subunits B1 and D2 of the V-ATPase complex, OXGR1, CA12, SLC4A1, AQP6 and IC-specific transcription factor FOXI1. Also regulates the expression of JAG1 and subsequent notch signaling in the collecting duct. JAG1 initiates notch signaling in PCs but inhibits notch signaling in ICs. Acts as a transcriptional suppressor that may suppress UBP1-mediated transcriptional activation. Modulates the placental expression of CYP11A1. This chain is Transcription factor CP2-like protein 1 (TFCP2L1), found in Pongo abelii (Sumatran orangutan).